The chain runs to 473 residues: Photosystem II CP43 reaction center protein (473 aa).

A propeptide spanning residues methionine 1–glutamate 14 is cleaved from the precursor. Threonine 15 is subject to N-acetylthreonine. Residue threonine 15 is modified to Phosphothreonine. 5 helical membrane passes run leucine 69–alanine 93, leucine 134–asparagine 155, lysine 178–threonine 200, lysine 255–serine 275, and tryptophan 291–alanine 312. A [CaMn4O5] cluster-binding site is contributed by glutamate 367. A helical transmembrane segment spans residues arginine 447–proline 471.

It belongs to the PsbB/PsbC family. PsbC subfamily. PSII is composed of 1 copy each of membrane proteins PsbA, PsbB, PsbC, PsbD, PsbE, PsbF, PsbH, PsbI, PsbJ, PsbK, PsbL, PsbM, PsbT, PsbX, PsbY, PsbZ, Psb30/Ycf12, at least 3 peripheral proteins of the oxygen-evolving complex and a large number of cofactors. It forms dimeric complexes. The cofactor is Binds multiple chlorophylls and provides some of the ligands for the Ca-4Mn-5O cluster of the oxygen-evolving complex. It may also provide a ligand for a Cl- that is required for oxygen evolution. PSII binds additional chlorophylls, carotenoids and specific lipids..

Its subcellular location is the plastid. The protein resides in the chloroplast thylakoid membrane. Its function is as follows. One of the components of the core complex of photosystem II (PSII). It binds chlorophyll and helps catalyze the primary light-induced photochemical processes of PSII. PSII is a light-driven water:plastoquinone oxidoreductase, using light energy to abstract electrons from H(2)O, generating O(2) and a proton gradient subsequently used for ATP formation. The sequence is that of Photosystem II CP43 reaction center protein from Chara vulgaris (Common stonewort).